The sequence spans 367 residues: WD repeat-containing protein 31 (367 aa).

7 WD repeats span residues 53-90 (AFQE…AYNW), 94-132 (NVVK…MWDL), 137-175 (QPRQ…LWDV), 179-217 (QSVE…LWDS), 221-264 (QVAH…LWDL), 269-311 (NRIC…IWNQ), and 315-353 (ACLF…LLRM).

The chain is WD repeat-containing protein 31 (WDR31) from Homo sapiens (Human).